A 520-amino-acid polypeptide reads, in one-letter code: Probable glycerol-3-phosphate acyltransferase 3 (520 aa).

A run of 5 helical transmembrane segments spans residues 5–20 (ISIFQALVFLFYRFIL), 64–84 (YFMLVAFEAGGVIRSFLLFIL), 88–108 (ISLMSHEMGVKVMVMVSFFGI), 264–284 (TLMNTLVLFMWGPFAAAAAAA), and 286–306 (LFVSLCIPYSLSIPILAFSGC). Positions 334–339 (HRTLLD) match the HXXXXD motif motif.

Belongs to the GPAT/DAPAT family. As to expression, widely expressed at low level. Expressed at higher level in seedlings and leaves.

The protein resides in the membrane. The catalysed reaction is sn-glycerol 3-phosphate + an acyl-CoA = a 1-acyl-sn-glycero-3-phosphate + CoA. The protein operates within phospholipid metabolism; CDP-diacylglycerol biosynthesis; CDP-diacylglycerol from sn-glycerol 3-phosphate: step 1/3. Its function is as follows. Esterifies acyl-group from acyl-ACP to the sn-1 position of glycerol-3-phosphate, an essential step in glycerolipid biosynthesis. This Arabidopsis thaliana (Mouse-ear cress) protein is Probable glycerol-3-phosphate acyltransferase 3 (GPAT3).